The primary structure comprises 554 residues: MDKRHDPSRRIIAPTGTKLSCKSWLTEAPMRMLMNNLHPDVAERPEDLVVYGGIGRAARDWECYDKIVEVLQRLEDDETLMVQSGKPVGVFKTHSNAPRVIIANSNLVPHWANWEHFNELDKKGLAMYGQMTAGSWIYIGSQGIVQGTYETFVAMAKQHFNGVSAGKWILTGGLGGMGGAQPLAGTMAGYSVLTCEVDETRIDFRLRTKYVDKKATSLDEALAMIEEANNSGKPVSVGLLANAADVFAELVERGITPDVVTDQTSAHDPLNGYLPQGWTLEYAAEMRKKDEAAVVKAAKQSMAVQVKAMLALQAAGAATTDYGNNIRQMAFEEGVENAFDFPGFVPAYVRPLFCEGIGPFRWVALSGDPEDIYKTDAKVKELIPDNPQLHNWLDMARERIAFQGLPSRICWVGLKDRARLALAFNEMVKNGELSAPIVIGRDHLDSGSVASPNRETESMLDGSDAVSDWPLMNALLNTASGATWVSLHHGGGVGMGFSQHSGVVIVADGTDDAAVRLGRVLWNDPATGVMRHADAGYDIAKNCAKEQGLDLPML.

Residues glycine 52–glycine 53, glutamine 130, glycine 176–glycine 178, glutamate 196, arginine 201, asparagine 242–alanine 243, glutamine 263–histidine 267, tyrosine 273–leucine 274, and tyrosine 322 contribute to the NAD(+) site. Cysteine 410 is an active-site residue. Glycine 492 provides a ligand contact to NAD(+).

The protein belongs to the urocanase family. NAD(+) serves as cofactor.

The protein localises to the cytoplasm. It carries out the reaction 4-imidazolone-5-propanoate = trans-urocanate + H2O. The protein operates within amino-acid degradation; L-histidine degradation into L-glutamate; N-formimidoyl-L-glutamate from L-histidine: step 2/3. Catalyzes the conversion of urocanate to 4-imidazolone-5-propionate. In Shewanella halifaxensis (strain HAW-EB4), this protein is Urocanate hydratase.